Consider the following 457-residue polypeptide: Cysteine--tRNA ligase (457 aa).

Cys27 contacts Zn(2+). Residues 29–39 (PTVYDFAHIGN) carry the 'HIGH' region motif. Zn(2+) is bound by residues Cys211, His236, and Glu240. The 'KMSKS' region motif lies at 269-273 (KMSKS). Lys272 is a binding site for ATP.

Belongs to the class-I aminoacyl-tRNA synthetase family. As to quaternary structure, monomer. Zn(2+) is required as a cofactor.

The protein resides in the cytoplasm. The catalysed reaction is tRNA(Cys) + L-cysteine + ATP = L-cysteinyl-tRNA(Cys) + AMP + diphosphate. The polypeptide is Cysteine--tRNA ligase (Ehrlichia ruminantium (strain Gardel)).